The primary structure comprises 338 residues: Glycerol-3-phosphate dehydrogenase [NAD(P)+] (338 aa).

NADPH contacts are provided by Trp11, Arg30, and Lys109. Residues Lys109, Gly143, and Ser145 each coordinate sn-glycerol 3-phosphate. An NADPH-binding site is contributed by Ala147. Sn-glycerol 3-phosphate is bound by residues Lys198, Asp251, Ser261, Arg262, and Asn263. Lys198 (proton acceptor) is an active-site residue. Arg262 provides a ligand contact to NADPH. Residues Val286 and Glu288 each contribute to the NADPH site.

It belongs to the NAD-dependent glycerol-3-phosphate dehydrogenase family.

Its subcellular location is the cytoplasm. It carries out the reaction sn-glycerol 3-phosphate + NAD(+) = dihydroxyacetone phosphate + NADH + H(+). The catalysed reaction is sn-glycerol 3-phosphate + NADP(+) = dihydroxyacetone phosphate + NADPH + H(+). It functions in the pathway membrane lipid metabolism; glycerophospholipid metabolism. Functionally, catalyzes the reduction of the glycolytic intermediate dihydroxyacetone phosphate (DHAP) to sn-glycerol 3-phosphate (G3P), the key precursor for phospholipid synthesis. The sequence is that of Glycerol-3-phosphate dehydrogenase [NAD(P)+] from Cupriavidus taiwanensis (strain DSM 17343 / BCRC 17206 / CCUG 44338 / CIP 107171 / LMG 19424 / R1) (Ralstonia taiwanensis (strain LMG 19424)).